A 667-amino-acid chain; its full sequence is DNA ligase (667 aa).

NAD(+)-binding positions include 34 to 38, 83 to 84, and E117; these read DYEFD and SL. K119 functions as the N6-AMP-lysine intermediate in the catalytic mechanism. NAD(+) contacts are provided by R140, E176, K289, and K313. Zn(2+)-binding residues include C407, C410, C425, and C431. One can recognise a BRCT domain in the interval 591–667; the sequence is QVNRNFEGMS…ISEDEFMGMM (77 aa).

This sequence belongs to the NAD-dependent DNA ligase family. LigA subfamily. It depends on Mg(2+) as a cofactor. Mn(2+) is required as a cofactor.

The enzyme catalyses NAD(+) + (deoxyribonucleotide)n-3'-hydroxyl + 5'-phospho-(deoxyribonucleotide)m = (deoxyribonucleotide)n+m + AMP + beta-nicotinamide D-nucleotide.. DNA ligase that catalyzes the formation of phosphodiester linkages between 5'-phosphoryl and 3'-hydroxyl groups in double-stranded DNA using NAD as a coenzyme and as the energy source for the reaction. It is essential for DNA replication and repair of damaged DNA. This chain is DNA ligase, found in Chlorobium chlorochromatii (strain CaD3).